The chain runs to 340 residues: Phenylalanine--tRNA ligase alpha subunit (340 aa).

Glu251 is a binding site for Mg(2+).

Belongs to the class-II aminoacyl-tRNA synthetase family. Phe-tRNA synthetase alpha subunit type 1 subfamily. Tetramer of two alpha and two beta subunits. Mg(2+) is required as a cofactor.

Its subcellular location is the cytoplasm. It catalyses the reaction tRNA(Phe) + L-phenylalanine + ATP = L-phenylalanyl-tRNA(Phe) + AMP + diphosphate + H(+). The sequence is that of Phenylalanine--tRNA ligase alpha subunit from Porphyromonas gingivalis (strain ATCC 33277 / DSM 20709 / CIP 103683 / JCM 12257 / NCTC 11834 / 2561).